The primary structure comprises 169 residues: Regulator of G-protein signaling rgs-2 (169 aa).

The RGS domain maps to 39-158; sequence GWSQSFENLM…FLASNIYKTV (120 aa).

In terms of processing, may be phosphorylated and activated by egl-4. Expressed in a subset of neurons including ventral cord and head- and tail-ganglia neurons. Also expressed in non-neuronal cells including pharyngeal and uterine muscles.

Its function is as follows. Weakly inhibits G protein signaling in nervous system, interacting preferentially with the G(O) subfamily member goa-1. In vitro, it acts as a GTPase activator of goa-1. Rgs-1 and rgs-2 redundantly adjust signaling when worms are fed to allow rapid induction of egg-laying behavior. Modulates chemotaxis responses by regulating negatively the sensitivity to quinine in ASH sensory neurons. This chain is Regulator of G-protein signaling rgs-2 (rgs-2), found in Caenorhabditis elegans.